The chain runs to 251 residues: Probable inactive cytidine deaminase 4 (251 aa).

61 to 63 (NVE) is a substrate binding site. Catalysis depends on glutamate 76, which acts as the Proton donor. The CMP/dCMP-type deaminase domain maps to 136–251 (EHCSHLKCRA…VFRCHKTAEN (116 aa)).

It belongs to the cytidine and deoxycytidylate deaminase family. Homodimer.

The protein is Probable inactive cytidine deaminase 4 (CDA4) of Arabidopsis thaliana (Mouse-ear cress).